A 472-amino-acid polypeptide reads, in one-letter code: NADH-quinone oxidoreductase subunit N (472 aa).

14 helical membrane passes run 11 to 31 (AELS…FLPA), 43 to 63 (ILLT…LFGG), 67 to 87 (STPM…LVFL), 103 to 123 (GEFY…VSAG), 125 to 145 (FLLF…LVAF), 159 to 179 (FILS…MIYG), 200 to 220 (VLAL…VPFH), 234 to 254 (VSAY…MIIL), 265 to 285 (WSEI…LFAI), 293 to 313 (FMAF…LAGT), 318 to 338 (ASLV…FGVI), 362 to 384 (PKLT…FAGF), 401 to 421 (LIVF…LLIV), and 446 to 466 (LLVC…YQLL).

It belongs to the complex I subunit 2 family. NDH-1 is composed of 14 different subunits. Subunits NuoA, H, J, K, L, M, N constitute the membrane sector of the complex.

It is found in the cell inner membrane. The catalysed reaction is a quinone + NADH + 5 H(+)(in) = a quinol + NAD(+) + 4 H(+)(out). Its function is as follows. NDH-1 shuttles electrons from NADH, via FMN and iron-sulfur (Fe-S) centers, to quinones in the respiratory chain. The immediate electron acceptor for the enzyme in this species is believed to be a menaquinone. Couples the redox reaction to proton translocation (for every two electrons transferred, four hydrogen ions are translocated across the cytoplasmic membrane), and thus conserves the redox energy in a proton gradient. This is NADH-quinone oxidoreductase subunit N from Phocaeicola vulgatus (strain ATCC 8482 / DSM 1447 / JCM 5826 / CCUG 4940 / NBRC 14291 / NCTC 11154) (Bacteroides vulgatus).